The primary structure comprises 305 residues: Oxygen-dependent coproporphyrinogen-III oxidase (305 aa).

Serine 97 contributes to the substrate binding site. A divalent metal cation-binding residues include histidine 101 and histidine 111. Catalysis depends on histidine 111, which acts as the Proton donor. Position 113-115 (113-115 (NVR)) interacts with substrate. Residues histidine 150 and histidine 180 each coordinate a divalent metal cation. An important for dimerization region spans residues 245–280 (YVEFNLVWDRGTHFGLQSGGRTESILLSMPPLASWA). 263–265 (GGR) is a substrate binding site.

It belongs to the aerobic coproporphyrinogen-III oxidase family. Homodimer. Requires a divalent metal cation as cofactor.

It is found in the cytoplasm. The catalysed reaction is coproporphyrinogen III + O2 + 2 H(+) = protoporphyrinogen IX + 2 CO2 + 2 H2O. Its pathway is porphyrin-containing compound metabolism; protoporphyrin-IX biosynthesis; protoporphyrinogen-IX from coproporphyrinogen-III (O2 route): step 1/1. Involved in the heme biosynthesis. Catalyzes the aerobic oxidative decarboxylation of propionate groups of rings A and B of coproporphyrinogen-III to yield the vinyl groups in protoporphyrinogen-IX. In Variovorax paradoxus (strain S110), this protein is Oxygen-dependent coproporphyrinogen-III oxidase.